Here is a 130-residue protein sequence, read N- to C-terminus: MSMQDPISDMLTRVRNGQSANKVAVKMPSSKLKVAIAALLKAEGYIADFAVEGDIKPELEITLKYFQAKPVIEQIQRVSRPGLRVYKKNDALPSVMGGLGIAVVSTSKGLMSDRAARKAGLGGEIICYVA.

This sequence belongs to the universal ribosomal protein uS8 family. Part of the 30S ribosomal subunit. Contacts proteins S5 and S12.

One of the primary rRNA binding proteins, it binds directly to 16S rRNA central domain where it helps coordinate assembly of the platform of the 30S subunit. This Aliivibrio fischeri (strain MJ11) (Vibrio fischeri) protein is Small ribosomal subunit protein uS8.